A 433-amino-acid chain; its full sequence is C2H2 type master regulator of conidiophore development brlA (433 aa).

Disordered stretches follow at residues 23 to 64 and 240 to 265; these read PSEC…SHYH and KTHT…PVSR. The segment covering 30–48 has biased composition (low complexity); the sequence is TSSFSPLDSPTPTPTSLYS. A compositionally biased stretch (polar residues) spans 240 to 264; that stretch reads KTHTPSTPHRSVSMGTPSGSDTPVS. 2 consecutive C2H2-type zinc fingers follow at residues 321–345 and 351–376; these read FKCK…MKSH and HVCW…TKTH. The disordered stretch occupies residues 391–416; sequence ETSQDFDPDFRGQLTPDGRPIYGSKL.

The protein localises to the nucleus. BrlA, abaA and wetA are pivotal regulators of conidiophore development and conidium maturation. They act individually and together to regulate their own expression and that of numerous other sporulation-specific genes. Binds promoters of target genes at brlA response elements (BREs) containing the conserved sequence 5'-(C/A)(A/G)AGGG(G/A)-3'. Is not required for penicillin V production. The protein is C2H2 type master regulator of conidiophore development brlA of Penicillium rubens (strain ATCC 28089 / DSM 1075 / NRRL 1951 / Wisconsin 54-1255) (Penicillium chrysogenum).